We begin with the raw amino-acid sequence, 462 residues long: Glycine--tRNA ligase (462 aa).

Residues arginine 100 and glutamate 174 each contribute to the substrate site. ATP is bound by residues 206–208 (RNE), 216–221 (FRTREF), 290–291 (EL), and 334–337 (GADR). Residue 221–225 (FEQME) coordinates substrate. 330–334 (EPSLG) is a binding site for substrate.

The protein belongs to the class-II aminoacyl-tRNA synthetase family. In terms of assembly, homodimer.

Its subcellular location is the cytoplasm. It carries out the reaction tRNA(Gly) + glycine + ATP = glycyl-tRNA(Gly) + AMP + diphosphate. Its function is as follows. Catalyzes the attachment of glycine to tRNA(Gly). This chain is Glycine--tRNA ligase, found in Alkaliphilus metalliredigens (strain QYMF).